We begin with the raw amino-acid sequence, 714 residues long: Calpain-1 catalytic subunit (714 aa).

N-acetylserine is present on Ser-2. Residues 55 to 354 enclose the Calpain catalytic domain; it reads LFRDEAFPPV…FTRLEICNLT (300 aa). Residues Gln-109 and Asp-114 each contribute to the Ca(2+) site. Residues Cys-115, His-272, and Asn-296 contribute to the active site. Ca(2+)-binding residues include Asn-316, Asp-318, and Asp-323. A Phosphothreonine modification is found at Thr-354. A domain III region spans residues 355–526; that stretch reads PDALKSRTIR…KSAGTVELDD (172 aa). Residues 527–542 are linker; it reads QIQANLPDEQVLSEEE. EF-hand domains lie at 541–576, 585–618, 615–650, and 680–714; these read EEID…IISK, FSLE…NRIR, NRIR…AGFK, and VRLE…TMFA. The interval 543–713 is domain IV; sequence IDENFKALFR…LFKWLQLTMF (171 aa). The Ca(2+) site is built by Asp-598, Asp-600, Asn-602, Lys-604, Glu-609, Asp-628, Asp-630, Ser-632, Ser-634, and Glu-639.

It belongs to the peptidase C2 family. Forms a heterodimer with a small (regulatory) subunit CAPNS1. Ca(2+) serves as cofactor. Undergoes calcium-induced successive autoproteolytic cleavages that generate a membrane-bound 78 kDa active form and an intracellular 75 kDa active form. Calpastatin reduces with high efficiency the transition from 78 kDa to 75 kDa calpain forms. Ubiquitous.

It is found in the cytoplasm. The protein localises to the cell membrane. It catalyses the reaction Broad endopeptidase specificity.. With respect to regulation, activated by micromolar concentrations of calcium and inhibited by calpastatin. Functionally, calcium-regulated non-lysosomal thiol-protease which catalyzes limited proteolysis of substrates involved in cytoskeletal remodeling and signal transduction. Proteolytically cleaves CTBP1 at 'Asn-375', 'Gly-387' and 'His-409'. Cleaves and activates caspase-7 (CASP7). The chain is Calpain-1 catalytic subunit from Homo sapiens (Human).